A 202-amino-acid chain; its full sequence is Stress enhanced protein 2, chloroplastic (202 aa).

The N-terminal 60 residues, 1 to 60 (MAMATRAIRYQLPSPRFRAPRCESSEPIKQIQIQQRPRGGDLAENGKIVLQPRLCTLRSY), are a transit peptide targeting the chloroplast. The next 2 membrane-spanning stretches (helical) occupy residues 111–131 (LAMI…NSLF) and 142–162 (AIGA…LTIS).

This sequence belongs to the ELIP/psbS family.

It localises to the plastid. It is found in the chloroplast thylakoid membrane. In terms of biological role, may be involved in non-photochemical quenching, a process that maintains the balance between dissipation and utilization of light energy to minimize generation of oxidizing molecules, thereby protecting the plant against photo-oxidative damage. May play a photoprotective role in the thylakoid membrane in response to light stress. In Arabidopsis thaliana (Mouse-ear cress), this protein is Stress enhanced protein 2, chloroplastic.